The chain runs to 750 residues: Photosystem I P700 chlorophyll a apoprotein A1 (750 aa).

Transmembrane regions (helical) follow at residues 70 to 93 (VFSAHFGQLAIIFVWLSGMYFHGA), 156 to 179 (LYCTAIGALIFATLMLFAGWFHYH), 195 to 219 (LNHHLAGLLGLGSLAWAGHQVHVSL), 291 to 309 (TVHHHLAIAVLFLVAGHMY), 346 to 369 (WHAQLALNLAMLGSLTIIVAHHMY), 385 to 411 (LSLFTHHMWIGGFLVVGAAAHAAIFMV), 433 to 455 (AIISHLNWVCIFLGFHSFGLYIH), and 531 to 549 (FLVHHIHAFTIHVTVLILL). Positions 573 and 582 each coordinate [4Fe-4S] cluster. 2 helical membrane passes run 589–610 (HVFLGLFWMYNSISIVIFHFSW) and 664–686 (LSAYGLLFLGAHFVWAFSLMFLF). Residue histidine 675 coordinates chlorophyll a'. Positions 683 and 691 each coordinate chlorophyll a. Tryptophan 692 is a phylloquinone binding site. Residues 724–744 (AVGVAHYLLGGIATTWAFFLA) traverse the membrane as a helical segment.

The protein belongs to the PsaA/PsaB family. As to quaternary structure, the PsaA/B heterodimer binds the P700 chlorophyll special pair and subsequent electron acceptors. PSI consists of a core antenna complex that captures photons, and an electron transfer chain that converts photonic excitation into a charge separation. The eukaryotic PSI reaction center is composed of at least 11 subunits. The cofactor is P700 is a chlorophyll a/chlorophyll a' dimer, A0 is one or more chlorophyll a, A1 is one or both phylloquinones and FX is a shared 4Fe-4S iron-sulfur center..

Its subcellular location is the plastid. It is found in the chloroplast thylakoid membrane. The enzyme catalyses reduced [plastocyanin] + hnu + oxidized [2Fe-2S]-[ferredoxin] = oxidized [plastocyanin] + reduced [2Fe-2S]-[ferredoxin]. PsaA and PsaB bind P700, the primary electron donor of photosystem I (PSI), as well as the electron acceptors A0, A1 and FX. PSI is a plastocyanin-ferredoxin oxidoreductase, converting photonic excitation into a charge separation, which transfers an electron from the donor P700 chlorophyll pair to the spectroscopically characterized acceptors A0, A1, FX, FA and FB in turn. Oxidized P700 is reduced on the lumenal side of the thylakoid membrane by plastocyanin. The protein is Photosystem I P700 chlorophyll a apoprotein A1 of Psilotum nudum (Whisk fern).